A 357-amino-acid polypeptide reads, in one-letter code: Meiotically up-regulated gene 135 protein (357 aa).

This sequence belongs to the UPF0612 family.

Its subcellular location is the nucleus. Has a role in meiosis. The protein is Meiotically up-regulated gene 135 protein (mug135) of Schizosaccharomyces pombe (strain 972 / ATCC 24843) (Fission yeast).